The primary structure comprises 233 residues: Aspartate/glutamate leucyltransferase (233 aa).

This sequence belongs to the R-transferase family. Bpt subfamily.

Its subcellular location is the cytoplasm. It catalyses the reaction N-terminal L-glutamyl-[protein] + L-leucyl-tRNA(Leu) = N-terminal L-leucyl-L-glutamyl-[protein] + tRNA(Leu) + H(+). The catalysed reaction is N-terminal L-aspartyl-[protein] + L-leucyl-tRNA(Leu) = N-terminal L-leucyl-L-aspartyl-[protein] + tRNA(Leu) + H(+). Functions in the N-end rule pathway of protein degradation where it conjugates Leu from its aminoacyl-tRNA to the N-termini of proteins containing an N-terminal aspartate or glutamate. This chain is Aspartate/glutamate leucyltransferase, found in Vibrio cholerae serotype O1 (strain ATCC 39541 / Classical Ogawa 395 / O395).